Reading from the N-terminus, the 350-residue chain is Cytosolic Fe-S cluster assembly factor NBP35 (350 aa).

The segment at Met-1–Gly-30 is disordered. The [4Fe-4S] cluster site is built by Cys-14, Cys-28, Cys-31, and Cys-37. Gly-67–Ser-74 provides a ligand contact to ATP.

This sequence belongs to the Mrp/NBP35 ATP-binding proteins family. NUBP1/NBP35 subfamily. As to quaternary structure, homodimer and homotetramer. Predominantly homodimeric. Requires [4Fe-4S] cluster as cofactor.

The protein localises to the cytoplasm. Functionally, component of the cytosolic iron-sulfur (Fe-S) protein assembly (CIA) machinery. Required for maturation of extramitochondrial Fe-S proteins. Functions as a Fe-S scaffold, mediating the de novo assembly of an Fe-S cluster and its transfer to target apoproteins. Essential for embryo development. The protein is Cytosolic Fe-S cluster assembly factor NBP35 of Arabidopsis thaliana (Mouse-ear cress).